The primary structure comprises 204 residues: High frequency lysogenization protein HflD homolog (204 aa).

It belongs to the HflD family.

Its subcellular location is the cytoplasm. The protein localises to the cell inner membrane. The polypeptide is High frequency lysogenization protein HflD homolog (Xanthomonas euvesicatoria pv. vesicatoria (strain 85-10) (Xanthomonas campestris pv. vesicatoria)).